Here is a 341-residue protein sequence, read N- to C-terminus: Tetraacyldisaccharide 4'-kinase (341 aa).

54–61 contacts ATP; the sequence is TVGGTGKT.

Belongs to the LpxK family.

It catalyses the reaction a lipid A disaccharide + ATP = a lipid IVA + ADP + H(+). The protein operates within glycolipid biosynthesis; lipid IV(A) biosynthesis; lipid IV(A) from (3R)-3-hydroxytetradecanoyl-[acyl-carrier-protein] and UDP-N-acetyl-alpha-D-glucosamine: step 6/6. Its function is as follows. Transfers the gamma-phosphate of ATP to the 4'-position of a tetraacyldisaccharide 1-phosphate intermediate (termed DS-1-P) to form tetraacyldisaccharide 1,4'-bis-phosphate (lipid IVA). This Mesorhizobium japonicum (strain LMG 29417 / CECT 9101 / MAFF 303099) (Mesorhizobium loti (strain MAFF 303099)) protein is Tetraacyldisaccharide 4'-kinase.